Here is an 83-residue protein sequence, read N- to C-terminus: MSSGGLLLLLGLLTLWEVLTPVSSKDHPKFCELPADTGSCKGNVPRFYYNADHHQCLKFIYGGCGGNANNFKTIEECKSTCAA.

Residues 1 to 24 (MSSGGLLLLLGLLTLWEVLTPVSS) form the signal peptide. Positions 31–81 (CELPADTGSCKGNVPRFYYNADHHQCLKFIYGGCGGNANNFKTIEECKSTC) constitute a BPTI/Kunitz inhibitor domain. 3 disulfide bridges follow: Cys-31–Cys-81, Cys-40–Cys-64, and Cys-56–Cys-77.

It belongs to the venom Kunitz-type family. Expressed by the venom gland.

The protein resides in the secreted. In terms of biological role, serine protease inhibitor. Does not inhibit plasmin, and does not reduce blood loss in the mouse tail vein blood loss model. This is Kunitz-type serine protease inhibitor textilinin-4 from Pseudonaja textilis textilis (Eastern brown snake).